A 61-amino-acid polypeptide reads, in one-letter code: Defensin BmKDfsin2 (61 aa).

Residues 1–24 form the signal peptide; sequence METIVLLFLLALVFCTLEMGMVEA. Cystine bridges form between Cys28/Cys49, Cys35/Cys57, and Cys39/Cys59.

The protein belongs to the invertebrate defensin family. Type 2 subfamily. Highly expressed in non-venom gland (hemolymph) and moderately expressed in venom gland.

The protein resides in the secreted. In terms of biological role, antibacterial peptide active against Gram-positive bacteria, but not on Gram-negative bacteria. Also has weak blocking activity on Kv1.1/KCNA1, Kv1.2/KCNA2, Kv1.3/KCNA3, KCa3.1/KCNN4/IK, KCa2.3/KCNN3/SK3 and Kv11.1/KCNH2/ERG1 channels (tested at 1 uM). It inhibits potassium channel current by interacting with the pore region. This chain is Defensin BmKDfsin2, found in Olivierus martensii (Manchurian scorpion).